A 355-amino-acid chain; its full sequence is 45 kDa calcium-binding protein (355 aa).

The N-terminal stretch at 1 to 29 (MASRQGPLCGLAPCCLWLLGVILLMNASA) is a signal peptide. Asparagine 26 carries N-linked (GlcNAc...) asparagine glycosylation. EF-hand domains follow at residues 91-126 (KSRRKLMVIFSKVDLNTDRRISAKEMQKWIMQKTAE) and 130-165 (EAVAESRAHFRAVDPDGDGHVSWDEYKVKFLATKGH). Position 92 is a phosphoserine (serine 92). Residues aspartate 104, asparagine 106, aspartate 108, arginine 110, glutamate 115, aspartate 143, aspartate 145, aspartate 147, histidine 149, and glutamate 154 each coordinate Ca(2+). Phosphothreonine occurs at positions 186 and 210. EF-hand domains are found at residues 226–261 (MLQFMVKEIIRDLDQDGDKKLSLSEFISLPVGTVEN), 271–306 (WVRDRKREFEELIDANHDGIVTMAELEDYMDPMNEF), and 307–342 (SALNEAKQMIAIADENQNHYLEPEEVLKYSEFFTGS). Aspartate 239, aspartate 241, aspartate 243, lysine 245, and glutamate 250 together coordinate Ca(2+). Position 258 is a phosphothreonine (threonine 258). The Ca(2+) site is built by aspartate 284, asparagine 286, and aspartate 288. Position 292 is a phosphothreonine (threonine 292). 6 residues coordinate Ca(2+): glutamate 295, aspartate 320, asparagine 322, asparagine 324, tyrosine 326, and glutamate 331. A necessary for intracellular retention in Golgi apparatus lumen region spans residues 302–355 (PMNEFSALNEAKQMIAIADENQNHYLEPEEVLKYSEFFTGSKLVDYARSVHEEF).

It belongs to the CREC family.

Its subcellular location is the golgi apparatus lumen. In terms of biological role, may regulate calcium-dependent activities in the endoplasmic reticulum lumen or post-ER compartment. In Capra hircus (Goat), this protein is 45 kDa calcium-binding protein (SDF4).